The chain runs to 380 residues: Phospho-N-acetylmuramoyl-pentapeptide-transferase (380 aa).

11 consecutive transmembrane segments (helical) span residues 26–46 (IVAA…LFIE), 75–95 (MGGA…ADLG), 98–118 (LVWA…WDDW), 135–155 (LVLQ…DWQP), 160–180 (GFPF…PFVP), 183–203 (LFSP…VVAT), 222–242 (IVSS…IAGF), 259–279 (LGVF…YNTY), 283–303 (VFMG…LAVL), 311–331 (AILH…VWSF), and 357–377 (KIIV…LMSL).

It belongs to the glycosyltransferase 4 family. MraY subfamily. Requires Mg(2+) as cofactor.

The protein resides in the cell inner membrane. It catalyses the reaction UDP-N-acetyl-alpha-D-muramoyl-L-alanyl-gamma-D-glutamyl-meso-2,6-diaminopimeloyl-D-alanyl-D-alanine + di-trans,octa-cis-undecaprenyl phosphate = di-trans,octa-cis-undecaprenyl diphospho-N-acetyl-alpha-D-muramoyl-L-alanyl-D-glutamyl-meso-2,6-diaminopimeloyl-D-alanyl-D-alanine + UMP. The protein operates within cell wall biogenesis; peptidoglycan biosynthesis. Catalyzes the initial step of the lipid cycle reactions in the biosynthesis of the cell wall peptidoglycan: transfers peptidoglycan precursor phospho-MurNAc-pentapeptide from UDP-MurNAc-pentapeptide onto the lipid carrier undecaprenyl phosphate, yielding undecaprenyl-pyrophosphoryl-MurNAc-pentapeptide, known as lipid I. The sequence is that of Phospho-N-acetylmuramoyl-pentapeptide-transferase from Anaeromyxobacter sp. (strain Fw109-5).